A 460-amino-acid polypeptide reads, in one-letter code: V-type ATP synthase beta chain (460 aa).

Belongs to the ATPase alpha/beta chains family.

Produces ATP from ADP in the presence of a proton gradient across the membrane. The V-type beta chain is a regulatory subunit. In Anaeromyxobacter sp. (strain Fw109-5), this protein is V-type ATP synthase beta chain.